A 229-amino-acid polypeptide reads, in one-letter code: Prolactin (229 aa).

Residues 1–30 form the signal peptide; the sequence is MDSKGSSQKGSRLLLLLVVSNLLLCQGVVS. C34 and C41 are joined by a disulfide. A phosphoserine mark is found at S56, S64, and S120. 2 disulfides stabilise this stretch: C88–C204 and C221–C229.

This sequence belongs to the somatotropin/prolactin family. Interacts with PRLR.

The protein resides in the secreted. Prolactin acts primarily on the mammary gland by promoting lactation. The polypeptide is Prolactin (PRL) (Bos taurus (Bovine)).